Consider the following 147-residue polypeptide: 3-dehydroquinate dehydratase (147 aa).

Tyr-23 functions as the Proton acceptor in the catalytic mechanism. Substrate-binding residues include Asn-75, His-81, and Asp-88. His-101 acts as the Proton donor in catalysis. Substrate contacts are provided by residues 102 to 103 (LS) and Arg-112.

Belongs to the type-II 3-dehydroquinase family. Homododecamer.

The catalysed reaction is 3-dehydroquinate = 3-dehydroshikimate + H2O. Its pathway is metabolic intermediate biosynthesis; chorismate biosynthesis; chorismate from D-erythrose 4-phosphate and phosphoenolpyruvate: step 3/7. Functionally, catalyzes a trans-dehydration via an enolate intermediate. The protein is 3-dehydroquinate dehydratase of Thioalkalivibrio sulfidiphilus (strain HL-EbGR7).